A 314-amino-acid chain; its full sequence is Malate dehydrogenase (314 aa).

NAD(+)-binding positions include 11–16 (GSGNIG) and D35. Substrate-binding residues include R84 and R90. Residues N97 and 120–122 (ITN) each bind NAD(+). N122 and R153 together coordinate substrate. Catalysis depends on H177, which acts as the Proton acceptor.

Belongs to the LDH/MDH superfamily. MDH type 3 family.

It catalyses the reaction (S)-malate + NAD(+) = oxaloacetate + NADH + H(+). Catalyzes the reversible oxidation of malate to oxaloacetate. This Rickettsia rickettsii (strain Iowa) protein is Malate dehydrogenase.